A 188-amino-acid polypeptide reads, in one-letter code: MPHSSSGAPLDPVAFIHSQIRTVPDWPQPGVMFRDITTLLQSPKALRILVDLFVERYVDAKLDYVAGLDARGFIIAPIVAYELSVGFVPIRKVGKLPYKTRSESYDLEYGSATVEIHEDACRPGDRVIIMDDLIATGGTMMAGRNLLQRLGAEVVEGAAIIDLPDLGGSALLRNAGLPVYTVTEFAGH.

The protein belongs to the purine/pyrimidine phosphoribosyltransferase family. In terms of assembly, homodimer.

Its subcellular location is the cytoplasm. It carries out the reaction AMP + diphosphate = 5-phospho-alpha-D-ribose 1-diphosphate + adenine. It participates in purine metabolism; AMP biosynthesis via salvage pathway; AMP from adenine: step 1/1. Its function is as follows. Catalyzes a salvage reaction resulting in the formation of AMP, that is energically less costly than de novo synthesis. In Burkholderia lata (strain ATCC 17760 / DSM 23089 / LMG 22485 / NCIMB 9086 / R18194 / 383), this protein is Adenine phosphoribosyltransferase.